The chain runs to 375 residues: Cobalt-precorrin-5B C(1)-methyltransferase (375 aa).

It belongs to the CbiD family.

It catalyses the reaction Co-precorrin-5B + S-adenosyl-L-methionine = Co-precorrin-6A + S-adenosyl-L-homocysteine. The protein operates within cofactor biosynthesis; adenosylcobalamin biosynthesis; cob(II)yrinate a,c-diamide from sirohydrochlorin (anaerobic route): step 6/10. Functionally, catalyzes the methylation of C-1 in cobalt-precorrin-5B to form cobalt-precorrin-6A. The protein is Cobalt-precorrin-5B C(1)-methyltransferase of Paracidovorax citrulli (strain AAC00-1) (Acidovorax citrulli).